A 58-amino-acid polypeptide reads, in one-letter code: UPF0339 protein MA_3316 (58 aa).

The protein belongs to the UPF0339 family.

This Methanosarcina acetivorans (strain ATCC 35395 / DSM 2834 / JCM 12185 / C2A) protein is UPF0339 protein MA_3316.